A 329-amino-acid chain; its full sequence is Phenylalanine--tRNA ligase alpha subunit (329 aa).

This sequence belongs to the class-II aminoacyl-tRNA synthetase family. Phe-tRNA synthetase alpha subunit type 1 subfamily. Tetramer of two alpha and two beta subunits. Requires Mg(2+) as cofactor.

The protein localises to the cytoplasm. The catalysed reaction is tRNA(Phe) + L-phenylalanine + ATP = L-phenylalanyl-tRNA(Phe) + AMP + diphosphate + H(+). This Buchnera aphidicola subsp. Schizaphis graminum (strain Sg) protein is Phenylalanine--tRNA ligase alpha subunit (pheS).